Here is a 433-residue protein sequence, read N- to C-terminus: Trigger factor (433 aa).

Positions G161–P246 constitute a PPIase FKBP-type domain.

It belongs to the FKBP-type PPIase family. Tig subfamily.

It is found in the cytoplasm. It carries out the reaction [protein]-peptidylproline (omega=180) = [protein]-peptidylproline (omega=0). Involved in protein export. Acts as a chaperone by maintaining the newly synthesized protein in an open conformation. Functions as a peptidyl-prolyl cis-trans isomerase. The sequence is that of Trigger factor from Vibrio cholerae serotype O1 (strain ATCC 39541 / Classical Ogawa 395 / O395).